A 287-amino-acid chain; its full sequence is 4,4'-diapophytoene synthase (287 aa).

(2E,6E)-farnesyl diphosphate contacts are provided by residues 18–21, Y41, and R45; that span reads HSKS. Residues D48 and D52 each contribute to the Mg(2+) site. Q165 is a (2E,6E)-farnesyl diphosphate binding site. N168 contacts Mg(2+). R171 serves as a coordination point for (2E,6E)-farnesyl diphosphate. D172 contacts Mg(2+). Y248 contacts (2E,6E)-farnesyl diphosphate.

The protein belongs to the phytoene/squalene synthase family. CrtM subfamily. Mg(2+) serves as cofactor.

It carries out the reaction 2 (2E,6E)-farnesyl diphosphate = 15-cis-4,4'-diapophytoene + 2 diphosphate. Its pathway is carotenoid biosynthesis; staphyloxanthin biosynthesis; staphyloxanthin from farnesyl diphosphate: step 1/5. Involved in the biosynthesis of the yellow-orange carotenoid staphyloxanthin, which plays a role in the virulence via its protective function against oxidative stress. Catalyzes the head-to-head condensation of two molecules of farnesyl diphosphate (FPP) into the colorless C(30) carotenoid 4,4'-diapophytoene (dehydrosqualene). This is 4,4'-diapophytoene synthase (crtM) from Staphylococcus aureus (strain Mu50 / ATCC 700699).